Consider the following 668-residue polypeptide: Probable syringafactin export ATP-binding/permease protein SyfD (668 aa).

The 239-residue stretch at 22-260 (LRLQQVSRSF…APEAQPATPP (239 aa)) folds into the ABC transporter domain. 58-65 (GASGSGKS) contributes to the ATP binding site. Positions 242 to 263 (RRTAQTTQPAPEAQPATPPGPA) are disordered. Low complexity predominate over residues 245–256 (AQTTQPAPEAQP). A run of 5 helical transmembrane segments spans residues 267–287 (LLAS…ALIS), 293–313 (LLTM…SAIG), 541–561 (LTLL…IGVM), 602–622 (MGGV…TLFV), and 631–651 (LASV…FGFV).

The protein belongs to the ABC transporter superfamily. Macrolide exporter (TC 3.A.1.122) family. Probably part of a tripartite efflux system, which is composed of an inner membrane transporter, a periplasmic membrane fusion protein, and an outer membrane component.

It is found in the cell inner membrane. Its function is as follows. Probably involved in the export of syringafactins. This Pseudomonas syringae pv. tomato (strain ATCC BAA-871 / DC3000) protein is Probable syringafactin export ATP-binding/permease protein SyfD.